A 468-amino-acid chain; its full sequence is Gasdermin-C (468 aa).

Residues methionine 1–lysine 230 are triggers pyroptosis.

The protein belongs to the gasdermin family. In terms of assembly, homooligomer; homooligomeric ring-shaped pore complex containing 27-28 subunits when inserted in the membrane. Post-translationally, cleavage by CASP8 relieves autoinhibition by releasing the N-terminal moiety (Gasdermin-C, N-terminal) that initiates pyroptosis. Palmitoylated.

Its subcellular location is the cytoplasm. It localises to the cytosol. The protein localises to the cell membrane. The full-length protein before cleavage is inactive: intramolecular interactions between N- and C-terminal domains mediate autoinhibition in the absence of activation signal. The intrinsic pyroptosis-inducing activity is carried by the released N-terminal moiety (Gasdermin-C, N-terminal) following cleavage by caspase CASP8. This form constitutes the precursor of the pore-forming protein: upon cleavage, the released N-terminal moiety (Gasdermin-C, N-terminal) binds to membranes and forms pores, triggering pyroptosis. Its function is as follows. Pore-forming protein that causes membrane permeabilization and pyroptosis. Produced by the cleavage of gasdermin-C by caspase CASP8 in response to death signals. After cleavage, moves to the plasma membrane where it strongly binds to membrane inner leaflet lipids. Homooligomerizes within the membrane and forms pores of 10-15 nanometers (nm) of inner diameter, triggering pyroptosis. The sequence is that of Gasdermin-C from Mus musculus (Mouse).